Consider the following 302-residue polypeptide: Putative fructose-bisphosphate aldolase (302 aa).

Asp86 functions as the Proton donor in the catalytic mechanism. Zn(2+) is bound by residues His87, Asp116, Glu146, and His192. A dihydroxyacetone phosphate-binding site is contributed by Gly193. His223 serves as a coordination point for Zn(2+). Dihydroxyacetone phosphate-binding positions include 224 to 226 (GAD) and 245 to 248 (NVNR).

The protein belongs to the class II fructose-bisphosphate aldolase family. In terms of assembly, homodimer. Zn(2+) serves as cofactor.

The enzyme catalyses beta-D-fructose 1,6-bisphosphate = D-glyceraldehyde 3-phosphate + dihydroxyacetone phosphate. It functions in the pathway carbohydrate degradation; glycolysis; D-glyceraldehyde 3-phosphate and glycerone phosphate from D-glucose: step 4/4. Catalyzes the aldol condensation of dihydroxyacetone phosphate (DHAP or glycerone-phosphate) with glyceraldehyde 3-phosphate (G3P) to form fructose 1,6-bisphosphate (FBP) in gluconeogenesis and the reverse reaction in glycolysis. This Coccidioides immitis (strain RS) (Valley fever fungus) protein is Putative fructose-bisphosphate aldolase.